Reading from the N-terminus, the 697-residue chain is Pentatricopeptide repeat-containing protein At5g46460, mitochondrial (697 aa).

A mitochondrion-targeting transit peptide spans 1 to 36 (MWSRAIFQRFRFRAFSISHVIHGKCYRSFSVTVEFQ). 14 PPR repeats span residues 39–64 (EVLI…VPSP), 65–95 (HVSL…MPVR), 96–130 (DVVS…SVVS), 131–157 (WTAM…MPVK), 158–192 (DTAA…NVIS), 193–223 (WTTM…CIKS), 224–258 (TSRP…GFLY), 259–289 (EEYV…KVHE), 290–324 (QVAV…SILP), 325–359 (NQST…GLET), 360–390 (DAFV…IFKK), 391–425 (SIVS…NKEP), 426–456 (DEIT…MSSG), and 463–497 (KIQH…PNEM). The interval 498–573 (VWLALLSACR…KPGSSWVVIR (76 aa)) is type E motif. A type E(+) motif region spans residues 574-602 (GKKHEFFSGDQPHCSRIYEKLEFLREKLK). Residues 603 to 697 (ELGYAPDYRS…NGTCSCGDYW (95 aa)) form a type DYW motif region.

The protein belongs to the PPR family. PCMP-H subfamily.

The protein localises to the mitochondrion. The polypeptide is Pentatricopeptide repeat-containing protein At5g46460, mitochondrial (PCMP-H49) (Arabidopsis thaliana (Mouse-ear cress)).